The sequence spans 411 residues: Adenylosuccinate synthetase (411 aa).

GTP-binding positions include 11–17 and 39–41; these read GDEGKGK and GHT. The active-site Proton acceptor is aspartate 12. Mg(2+)-binding residues include aspartate 12 and glycine 39. IMP contacts are provided by residues 12-15, 37-40, threonine 121, arginine 135, glutamine 215, threonine 230, and arginine 294; these read DEGK and NAGH. Residue histidine 40 is the Proton donor of the active site. 290-296 is a substrate binding site; it reads TTTKRPR. GTP-binding positions include arginine 296, 322 to 324, and 400 to 402; these read KLD and STS.

It belongs to the adenylosuccinate synthetase family. Homodimer. It depends on Mg(2+) as a cofactor.

The protein resides in the cytoplasm. It carries out the reaction IMP + L-aspartate + GTP = N(6)-(1,2-dicarboxyethyl)-AMP + GDP + phosphate + 2 H(+). Its pathway is purine metabolism; AMP biosynthesis via de novo pathway; AMP from IMP: step 1/2. Functionally, plays an important role in the de novo pathway of purine nucleotide biosynthesis. Catalyzes the first committed step in the biosynthesis of AMP from IMP. The polypeptide is Adenylosuccinate synthetase (Helicobacter pylori (strain G27)).